A 140-amino-acid polypeptide reads, in one-letter code: Protein ripply1 (140 aa).

A WRPW motif; required for gro2-binding motif is present at residues 28 to 31 (WRPW). Positions 71 to 106 (HPVRLYWPRSKSFDYLFSDGEALLRNFPVQATINFY) are ripply homology domain. Positions 107–126 (DESDSEDEEESCDEDDESDV) are disordered.

It belongs to the ripply family. As to quaternary structure, interacts with gro2 via the WRPW motif. As to expression, expressed in the embryonic anterior presomitic mesoderm and in newly formed somites.

It localises to the nucleus. In terms of biological role, plays a role in somitogenesis. Essential for transcriptional repression of the segmental patterning genes, thus terminating the segmentation program in the presomitic mesoderm, and also required for the maintenance of rostrocaudal polarity in somites. The chain is Protein ripply1 from Danio rerio (Zebrafish).